The sequence spans 288 residues: Shikimate dehydrogenase (NADP(+)) (288 aa).

Residues 21–23 (SLS) and Thr-68 each bind shikimate. The Proton acceptor role is filled by Lys-72. NADP(+) is bound at residue Glu-84. 2 residues coordinate shikimate: Asn-93 and Asp-108. Residues 132 to 136 (GNGGA) and Leu-230 each bind NADP(+). Position 232 (Tyr-232) interacts with shikimate. Residue Gly-253 coordinates NADP(+).

This sequence belongs to the shikimate dehydrogenase family. In terms of assembly, homodimer.

The enzyme catalyses shikimate + NADP(+) = 3-dehydroshikimate + NADPH + H(+). The protein operates within metabolic intermediate biosynthesis; chorismate biosynthesis; chorismate from D-erythrose 4-phosphate and phosphoenolpyruvate: step 4/7. Its function is as follows. Involved in the biosynthesis of the chorismate, which leads to the biosynthesis of aromatic amino acids. Catalyzes the reversible NADPH linked reduction of 3-dehydroshikimate (DHSA) to yield shikimate (SA). The polypeptide is Shikimate dehydrogenase (NADP(+)) (Gloeothece citriformis (strain PCC 7424) (Cyanothece sp. (strain PCC 7424))).